The following is a 254-amino-acid chain: Leucyl/phenylalanyl-tRNA--protein transferase (254 aa).

Belongs to the L/F-transferase family.

The protein localises to the cytoplasm. It catalyses the reaction N-terminal L-lysyl-[protein] + L-leucyl-tRNA(Leu) = N-terminal L-leucyl-L-lysyl-[protein] + tRNA(Leu) + H(+). It carries out the reaction N-terminal L-arginyl-[protein] + L-leucyl-tRNA(Leu) = N-terminal L-leucyl-L-arginyl-[protein] + tRNA(Leu) + H(+). The enzyme catalyses L-phenylalanyl-tRNA(Phe) + an N-terminal L-alpha-aminoacyl-[protein] = an N-terminal L-phenylalanyl-L-alpha-aminoacyl-[protein] + tRNA(Phe). Functions in the N-end rule pathway of protein degradation where it conjugates Leu, Phe and, less efficiently, Met from aminoacyl-tRNAs to the N-termini of proteins containing an N-terminal arginine or lysine. This is Leucyl/phenylalanyl-tRNA--protein transferase from Burkholderia ambifaria (strain MC40-6).